Consider the following 105-residue polypeptide: Vacuolar ATPase assembly integral membrane protein VMA21 homolog (105 aa).

The tract at residues 1 to 26 is disordered; that stretch reads MSTKNKKAAGGNGGAPKQTRQQSHDS. The Cytoplasmic portion of the chain corresponds to 1-36; that stretch reads MSTKNKKAAGGNGGAPKQTRQQSHDSQDYSSFKTVL. A helical transmembrane segment spans residues 37–57; that stretch reads FYCMLIVFLPVLTFFVLKGFV. Over 58 to 68 the chain is Lumenal; that stretch reads LDQFLDISEVK. Residues 69-89 traverse the membrane as a helical segment; that stretch reads VNIASAVGAVVALHIALGLYI. At 90 to 105 the chain is on the cytoplasmic side; the sequence is YRAYFGAPGSKGSKTD.

Belongs to the VMA21 family.

Its subcellular location is the endoplasmic reticulum membrane. The protein resides in the endoplasmic reticulum-Golgi intermediate compartment membrane. The protein localises to the cytoplasmic vesicle. It localises to the COPII-coated vesicle membrane. Its function is as follows. Required for the assembly of the V0 complex of the vacuolar ATPase (V-ATPase) in the endoplasmic reticulum. This is Vacuolar ATPase assembly integral membrane protein VMA21 homolog from Drosophila simulans (Fruit fly).